A 1425-amino-acid polypeptide reads, in one-letter code: Rho GTPase-activating protein 31 (1425 aa).

The Rho-GAP domain occupies 21–216 (CDLTEYLESS…FILNHADQIF (196 aa)). Residues 258–277 (LATNHPARKERRENSLPEIV) form a disordered region. At S272 the chain carries Phosphoserine. T283 is subject to Phosphothreonine. Residues S343, S346, S384, and S464 each carry the phosphoserine modification. Residues 511–522 (EEFSFQGSESGG) show a composition bias toward low complexity. Disordered regions lie at residues 511–621 (EEFS…GAGT), 652–700 (SEEE…TRDA), and 756–951 (IEIG…GNSH). Basic and acidic residues-rich tracts occupy residues 543–556 (AATE…EVPG) and 587–600 (KEAE…KVME). The segment covering 603-615 (QGASQPKPSTPQE) has biased composition (polar residues). T666 is subject to Phosphothreonine. A compositionally biased stretch (pro residues) spans 671–681 (ESSPAPFPFPE). 3 positions are modified to phosphoserine: S685, S690, and S765. Residues 767–777 (PLTPAPPPPTP) show a composition bias toward pro residues. T769 is modified (phosphothreonine). The residue at position 776 (T776) is a Phosphothreonine; by GSK3. Over residues 789 to 804 (EGPDREDAARDSRTDV) the composition is skewed to basic and acidic residues. Positions 936-951 (LRQSHSLDSKTTGNSH) are enriched in polar residues. 4 positions are modified to phosphoserine: S961, S1092, S1093, and S1163. The tract at residues 1031 to 1095 (KEQEPQLELS…KGKHRPSSLN (65 aa)) is disordered. 3 stretches are compositionally biased toward polar residues: residues 1196–1206 (QIPQPLPSQST), 1250–1260 (QETGASASRRQ), and 1299–1308 (TEPSGDNLLS). Disordered regions lie at residues 1196-1260 (QIPQ…SRRQ) and 1291-1327 (QCRK…SRPG).

In terms of assembly, interacts with ITSN1, which inhibits GAP activity. Interacts with PARVA. Interacts with GTP-loaded RHOU. Post-translationally, phosphorylated on Thr-776 by GSK3; which reduces GAP activity. Expressed at highest levels in heart and lung.

Its subcellular location is the cell projection. It localises to the lamellipodium. It is found in the cell junction. The protein localises to the focal adhesion. In terms of biological role, functions as a GTPase-activating protein (GAP) for RAC1 and CDC42. Required for cell spreading, polarized lamellipodia formation and cell migration. This chain is Rho GTPase-activating protein 31 (Arhgap31), found in Mus musculus (Mouse).